The sequence spans 508 residues: Probable cytosol aminopeptidase (508 aa).

Mn(2+) is bound by residues K274 and D279. K286 is a catalytic residue. Positions 297, 356, and 358 each coordinate Mn(2+). R360 is a catalytic residue.

The protein belongs to the peptidase M17 family. Mn(2+) serves as cofactor.

Its subcellular location is the cytoplasm. The enzyme catalyses Release of an N-terminal amino acid, Xaa-|-Yaa-, in which Xaa is preferably Leu, but may be other amino acids including Pro although not Arg or Lys, and Yaa may be Pro. Amino acid amides and methyl esters are also readily hydrolyzed, but rates on arylamides are exceedingly low.. The catalysed reaction is Release of an N-terminal amino acid, preferentially leucine, but not glutamic or aspartic acids.. Functionally, presumably involved in the processing and regular turnover of intracellular proteins. Catalyzes the removal of unsubstituted N-terminal amino acids from various peptides. In Cutibacterium acnes (strain DSM 16379 / KPA171202) (Propionibacterium acnes), this protein is Probable cytosol aminopeptidase.